Here is a 171-residue protein sequence, read N- to C-terminus: Adenine phosphoribosyltransferase (171 aa).

It belongs to the purine/pyrimidine phosphoribosyltransferase family. As to quaternary structure, homodimer.

The protein localises to the cytoplasm. It catalyses the reaction AMP + diphosphate = 5-phospho-alpha-D-ribose 1-diphosphate + adenine. It functions in the pathway purine metabolism; AMP biosynthesis via salvage pathway; AMP from adenine: step 1/1. Catalyzes a salvage reaction resulting in the formation of AMP, that is energically less costly than de novo synthesis. In Citrifermentans bemidjiense (strain ATCC BAA-1014 / DSM 16622 / JCM 12645 / Bem) (Geobacter bemidjiensis), this protein is Adenine phosphoribosyltransferase.